Consider the following 434-residue polypeptide: Trigger factor 2 (434 aa).

Residues 164 to 247 (GDTVTVDYDC…VKKVERIEIL (84 aa)) form the PPIase FKBP-type domain.

This sequence belongs to the FKBP-type PPIase family. Tig subfamily.

The protein localises to the cytoplasm. It catalyses the reaction [protein]-peptidylproline (omega=180) = [protein]-peptidylproline (omega=0). Functionally, involved in protein export. Acts as a chaperone by maintaining the newly synthesized protein in an open conformation. Functions as a peptidyl-prolyl cis-trans isomerase. The chain is Trigger factor 2 from Desulfitobacterium hafniense (strain Y51).